Reading from the N-terminus, the 218-residue chain is Small ribosomal subunit protein uS3 (218 aa).

The KH type-2 domain occupies 38-106 (IREYISKRLQ…RVHINIVEIK (69 aa)).

This sequence belongs to the universal ribosomal protein uS3 family. As to quaternary structure, part of the 30S ribosomal subunit. Forms a tight complex with proteins S10 and S14.

Functionally, binds the lower part of the 30S subunit head. Binds mRNA in the 70S ribosome, positioning it for translation. The sequence is that of Small ribosomal subunit protein uS3 from Geobacillus kaustophilus (strain HTA426).